The following is a 102-amino-acid chain: uncharacterized protein (102 aa).

An N-terminal signal peptide occupies residues 1–41; that stretch reads MLFLDSYSLLIQFQRFKNWESPRRFSSSFPLLLFVFKPIFA.

This is an uncharacterized protein from Saccharomyces cerevisiae (strain ATCC 204508 / S288c) (Baker's yeast).